Reading from the N-terminus, the 101-residue chain is STAS-domain containing protein PA14_20770 (101 aa).

The region spanning 14 to 101 is the STAS domain; it reads LTIQIQGRFD…SNFEQLFKIS (88 aa).

Post-translationally, phosphorylated on a serine residue, possibly on Ser-56.

It is found in the secreted. This chain is STAS-domain containing protein PA14_20770, found in Pseudomonas aeruginosa (strain UCBPP-PA14).